A 459-amino-acid chain; its full sequence is Ribulose bisphosphate carboxylase (459 aa).

Asn111 provides a ligand contact to substrate. The Proton acceptor role is filled by Lys166. Substrate is bound at residue Lys168. Mg(2+)-binding residues include Lys191, Asp193, and Glu194. At Lys191 the chain carries N6-carboxylysine. Catalysis depends on His287, which acts as the Proton acceptor. Residues Arg288, His321, and Ser368 each coordinate substrate.

It belongs to the RuBisCO large chain family. Type II subfamily. The complex is approximately 350 kDa when isolated from either T.denitrificans or R.sphaeroides, suggesting a homohexamer or homooctamer structure. Requires Mg(2+) as cofactor.

It catalyses the reaction 2 (2R)-3-phosphoglycerate + 2 H(+) = D-ribulose 1,5-bisphosphate + CO2 + H2O. The catalysed reaction is D-ribulose 1,5-bisphosphate + O2 = 2-phosphoglycolate + (2R)-3-phosphoglycerate + 2 H(+). Functionally, ruBisCO catalyzes two reactions: the carboxylation of D-ribulose 1,5-bisphosphate, the primary event in carbon dioxide fixation, as well as the oxidative fragmentation of the pentose substrate. Both reactions occur simultaneously and in competition at the same active site. This chain is Ribulose bisphosphate carboxylase (cbbM), found in Thiobacillus denitrificans (strain ATCC 25259 / T1).